The sequence spans 1009 residues: DNA ligase 3 (1009 aa).

The transit peptide at 1 to 42 (MSLAFKIFFPQTLRALSRKELCLFRKHHWRDVRQFSQWSETD) directs the protein to the mitochondrion. The segment at 93–185 (FCVDYAKRGT…QITQHIADLS (93 aa)) adopts a PARP-type zinc-finger fold. The Zn(2+) site is built by Cys-105, Cys-108, His-139, and Cys-142. Residues Ser-210, Ser-216, Ser-227, and Ser-242 each carry the phosphoserine modification. The interval 224-256 (RKFSGFSAKPNNSGEAPSSPTPKRSLSSSKCDP) is disordered. A compositionally biased stretch (low complexity) spans 240–252 (PSSPTPKRSLSSS). 4 interaction with DNA regions span residues 277–280 (PSYN), 318–323 (VYNLND), 388–391 (TKED), and 421–427 (KMNSGAK). ATP is bound at residue Glu-506. Lys-508 (N6-AMP-lysine intermediate) is an active-site residue. 2 residues coordinate ATP: Arg-513 and Arg-528. Mg(2+) contacts are provided by Glu-560 and Glu-655. Residues Lys-660, Arg-671, and Lys-675 each contribute to the ATP site. Residues 842 to 917 (AGDEGSSTTG…LATKSSPVKV (76 aa)) form a disordered region. Low complexity-rich tracts occupy residues 845-854 (EGSSTTGGSS) and 863-877 (SAVS…SAST). The span at 884-898 (LSNSNSKDGNMQTAK) shows a compositional bias: polar residues. Ser-913 is subject to Phosphoserine. The 77-residue stretch at 933–1009 (VLLDIFTGVR…IRKRRLVAPC (77 aa)) folds into the BRCT domain.

The protein belongs to the ATP-dependent DNA ligase family. As to quaternary structure, isoform 3 interacts (via BRCT domain) with the nuclear DNA-repair protein XRCC1. Interacts with POLG. Interacts with POLB. Mg(2+) serves as cofactor. In terms of tissue distribution, testis, thymus, prostate and heart.

Its subcellular location is the mitochondrion. It is found in the nucleus. The enzyme catalyses ATP + (deoxyribonucleotide)n-3'-hydroxyl + 5'-phospho-(deoxyribonucleotide)m = (deoxyribonucleotide)n+m + AMP + diphosphate.. In terms of biological role, isoform 3 functions as a heterodimer with DNA-repair protein XRCC1 in the nucleus and can correct defective DNA strand-break repair and sister chromatid exchange following treatment with ionizing radiation and alkylating agents. Isoform 1 is targeted to mitochondria, where it functions as a DNA ligase in mitochondrial base-excision DNA repair. This is DNA ligase 3 (LIG3) from Homo sapiens (Human).